The following is a 91-amino-acid chain: UPF0512 protein F (91 aa).

The protein belongs to the UPF0512 family.

This is UPF0512 protein F from Dictyostelium discoideum (Social amoeba).